The chain runs to 189 residues: Blue copper protein (189 aa).

The N-terminal stretch at 1–24 (MAFSNALVLCFLLAIINMALPSLA) is a signal peptide. In terms of domain architecture, Phytocyanin spans 25 to 124 (TVYTVGDTSG…GMKLSIKVKA (100 aa)). The Cu cation site is built by His-65, Cys-106, and His-111. Cysteines 78 and 106 form a disulfide. Positions 127–160 (GSSAAPSATPSSSGKGSPSSDDTPAATTTTTTPT) are enriched in low complexity. Positions 127–165 (GSSAAPSATPSSSGKGSPSSDDTPAATTTTTTPTKQNES) are disordered. The N-linked (GlcNAc...) asparagine glycan is linked to Asn-163.

The sequence is that of Blue copper protein from Pisum sativum (Garden pea).